We begin with the raw amino-acid sequence, 154 residues long: Interleukin-2 (154 aa).

The signal sequence occupies residues 1-20 (MYRMQLLSCIALSLALVTNS). A glycan (O-linked (GalNAc...) threonine) is linked at threonine 23. The cysteines at positions 78 and 126 are disulfide-linked.

Belongs to the IL-2 family.

Its subcellular location is the secreted. Its function is as follows. Cytokine produced by activated CD4-positive helper T-cells and to a lesser extend activated CD8-positive T-cells and natural killer (NK) cells that plays pivotal roles in the immune response and tolerance. Binds to a receptor complex composed of either the high-affinity trimeric IL-2R (IL2RA/CD25, IL2RB/CD122 and IL2RG/CD132) or the low-affinity dimeric IL-2R (IL2RB and IL2RG). Interaction with the receptor leads to oligomerization and conformation changes in the IL-2R subunits resulting in downstream signaling starting with phosphorylation of JAK1 and JAK3. In turn, JAK1 and JAK3 phosphorylate the receptor to form a docking site leading to the phosphorylation of several substrates including STAT5. This process leads to activation of several pathways including STAT, phosphoinositide-3-kinase/PI3K and mitogen-activated protein kinase/MAPK pathways. Functions as a T-cell growth factor and can increase NK-cell cytolytic activity as well. Promotes strong proliferation of activated B-cells and subsequently immunoglobulin production. Plays a pivotal role in regulating the adaptive immune system by controlling the survival and proliferation of regulatory T-cells, which are required for the maintenance of immune tolerance. Moreover, participates in the differentiation and homeostasis of effector T-cell subsets, including Th1, Th2, Th17 as well as memory CD8-positive T-cells. This Macaca fascicularis (Crab-eating macaque) protein is Interleukin-2 (IL2).